The following is a 433-amino-acid chain: MGTFKIYPGKLKGEVKIPPSKSMAHRGVICAALGDGISKIRNINYSDDIRATINAMRSLGAIITKEDEYLHIIGIKSEKCKKNIELNRTIDCNESGSTLRFLVPISCIFEGSSRFIGKGNLGKRPLDTYYEIFDNQGIKYSYKKGKLDLRIQGILKYGEFKLRGDISSQFISGMLFTLPLLEGDSKIIITTELESKGYIDLTLSAMSDFGIEIINNNYREFIIKGNQTYKSIDYRIEGDYSQAAFFLVADALKSEVFINDLKLESLQGDKEVIEILERMNMKIKNIDNSLLGIPRENLEATIIDGSQCPDIIPVISLAASLCNGRTEIINVGRLRIKECDRLSAVASELNKLGANIIEKEDSLIIDGVKTLKGGVKVWSHKDHRIAMMLAIASTVCMEPIILEDYECISKSYPEFFDDFKALGGNFHEWNLGE.

3-phosphoshikimate is bound by residues lysine 21, serine 22, and arginine 26. Lysine 21 contacts phosphoenolpyruvate. Residues glycine 96 and arginine 124 each contribute to the phosphoenolpyruvate site. 3-phosphoshikimate contacts are provided by serine 167, serine 168, glutamine 169, serine 195, aspartate 310, and lysine 337. Glutamine 169 is a phosphoenolpyruvate binding site. The Proton acceptor role is filled by aspartate 310. Residues arginine 341, arginine 384, and lysine 410 each coordinate phosphoenolpyruvate.

It belongs to the EPSP synthase family. As to quaternary structure, monomer.

It is found in the cytoplasm. It carries out the reaction 3-phosphoshikimate + phosphoenolpyruvate = 5-O-(1-carboxyvinyl)-3-phosphoshikimate + phosphate. It participates in metabolic intermediate biosynthesis; chorismate biosynthesis; chorismate from D-erythrose 4-phosphate and phosphoenolpyruvate: step 6/7. Its function is as follows. Catalyzes the transfer of the enolpyruvyl moiety of phosphoenolpyruvate (PEP) to the 5-hydroxyl of shikimate-3-phosphate (S3P) to produce enolpyruvyl shikimate-3-phosphate and inorganic phosphate. The sequence is that of 3-phosphoshikimate 1-carboxyvinyltransferase from Clostridium botulinum (strain Alaska E43 / Type E3).